The following is a 137-amino-acid chain: Large ribosomal subunit protein uL16 (137 aa).

This sequence belongs to the universal ribosomal protein uL16 family. In terms of assembly, part of the 50S ribosomal subunit.

In terms of biological role, binds 23S rRNA and is also seen to make contacts with the A and possibly P site tRNAs. This chain is Large ribosomal subunit protein uL16, found in Cereibacter sphaeroides (strain ATCC 17025 / ATH 2.4.3) (Rhodobacter sphaeroides).